Here is a 422-residue protein sequence, read N- to C-terminus: Protein TEX1 (422 aa).

5 WD repeats span residues 61-100 (ITPN…FDKS), 158-197 (GSKT…SSVC), 207-246 (EDND…LEVC), 251-290 (AHTG…CELI), and 293-332 (DLNS…LLHS). The segment at 388-422 (KRRKNNGGGNNHNKRTSKNTDRIGKDRPSRFNSKK) is disordered. Residues 405–416 (KNTDRIGKDRPS) show a composition bias toward basic and acidic residues.

This sequence belongs to the THOC3 family. Component of the transcription/export (TREX) complex and the THO complex.

It is found in the nucleus. Functionally, component of the TREX complex, which operates in coupling transcription elongation to mRNA export. In Saccharomyces cerevisiae (strain ATCC 204508 / S288c) (Baker's yeast), this protein is Protein TEX1 (TEX1).